Consider the following 489-residue polypeptide: Glycogen synthase (489 aa).

Residue Lys-17 coordinates ADP-alpha-D-glucose.

It belongs to the glycosyltransferase 1 family. Bacterial/plant glycogen synthase subfamily.

The enzyme catalyses [(1-&gt;4)-alpha-D-glucosyl](n) + ADP-alpha-D-glucose = [(1-&gt;4)-alpha-D-glucosyl](n+1) + ADP + H(+). It functions in the pathway glycan biosynthesis; glycogen biosynthesis. In terms of biological role, synthesizes alpha-1,4-glucan chains using ADP-glucose. The polypeptide is Glycogen synthase (Nitratidesulfovibrio vulgaris (strain ATCC 29579 / DSM 644 / CCUG 34227 / NCIMB 8303 / VKM B-1760 / Hildenborough) (Desulfovibrio vulgaris)).